The sequence spans 847 residues: Guanine nucleotide exchange factor VAV3 (847 aa).

Residues 1–119 (MEPWKQCAQW…ETLSRLSRTP (119 aa)) form the Calponin-homology (CH) domain. At tyrosine 141 the chain carries Phosphotyrosine. In terms of domain architecture, DH spans 192 to 371 (IRSCCLAEIK…KDLAQYVNEV (180 aa)). The region spanning 400-502 (RPQGDGEIRI…WLEQFEMALS (103 aa)) is the PH domain. The segment at 513-562 (FHDFKMHTFTRVTSCKVCQMLLRGTFYQGYLCFKCGARAHKECLGRVDNC) adopts a Phorbol-ester/DAG-type zinc-finger fold. Positions 560-847 (DNCGRVNSGE…FPSTYVEEDE (288 aa)) are sufficient for interaction with ROS1. Residues 592 to 660 (PGLPKMQVIR…PSDAVKPCPC (69 aa)) enclose the SH3 1 domain. Residues 672-766 (WYAGAMERLQ…TLDTTLQFPY (95 aa)) form the SH2 domain. The region spanning 788 to 847 (KVLGIAIARYDFCARDMRELSLLKGDVVKIYTKMSANGWWRGEVNGRVGWFPSTYVEEDE) is the SH3 2 domain.

Interacts with the PH domain of SH2B2. Interacts (via SH2 domains) with the phosphorylated form of EPHA2. Interacts with ROS1; constitutive interaction that mediates VAV3 phosphorylation. Post-translationally, phosphorylated. Phosphorylation can be mediated by ROS1. In osteoclasts, undergoes tyrosine phosphorylation in response to CSF1. In terms of tissue distribution, isoform 1 and isoform 3 are widely expressed; both are expressed at very low levels in skeletal muscle. In keratinocytes, isoform 1 is less abundant than isoform 3. Isoform 3 is detected at very low levels, if any, in adrenal gland, bone marrow, spleen, fetal brain and spinal cord; in these tissues, isoform 1 is readily detectable.

In terms of biological role, exchange factor for GTP-binding proteins RhoA, RhoG and, to a lesser extent, Rac1. Binds physically to the nucleotide-free states of those GTPases. Plays an important role in angiogenesis. Its recruitment by phosphorylated EPHA2 is critical for EFNA1-induced RAC1 GTPase activation and vascular endothelial cell migration and assembly. May be important for integrin-mediated signaling, at least in some cell types. In osteoclasts, along with SYK tyrosine kinase, required for signaling through integrin alpha-v/beta-1 (ITAGV-ITGB1), a crucial event for osteoclast proper cytoskeleton organization and function. This signaling pathway involves RAC1, but not RHO, activation. Necessary for proper wound healing. In the course of wound healing, required for the phagocytotic cup formation preceding macrophage phagocytosis of apoptotic neutrophils. Responsible for integrin beta-2 (ITGB2)-mediated macrophage adhesion and, to a lesser extent, contributes to beta-3 (ITGB3)-mediated adhesion. Does not affect integrin beta-1 (ITGB1)-mediated adhesion. The polypeptide is Guanine nucleotide exchange factor VAV3 (VAV3) (Homo sapiens (Human)).